Here is a 2752-residue protein sequence, read N- to C-terminus: Protein PFF0380w (2752 aa).

The segment covering 20–30 (EREKEEEEKKR) has biased composition (basic and acidic residues). Disordered stretches follow at residues 20 to 44 (EREKEEEEKKRNYNISNNNNNNNYN), 139 to 160 (HIHKNNDINNIHEKNDKSNNDY), 634 to 678 (NDIV…INMK), 1048 to 1130 (DKKS…SGEN), and 1153 to 1172 (ENLQSDENHNNILYPYNNNG). The span at 32–44 (YNISNNNNNNNYN) shows a compositional bias: low complexity. A compositionally biased stretch (basic and acidic residues) spans 142–157 (KNNDINNIHEKNDKSN). The segment covering 640–674 (NNNNNNNNNNNNNNNNNNNNNNNNNNNNNNNNNNN) has biased composition (low complexity). Basic and acidic residues predominate over residues 1048–1060 (DKKSEDMKEDTPT). Residues 1061 to 1075 (RGENLQRGQNLQRGD) are compositionally biased toward polar residues. The span at 1076–1090 (NLQRGDNLQRGDNLQ) shows a compositional bias: basic and acidic residues. Residues 1091 to 1130 (RGDNLQNGDNLQNGDNLQRGDNLQNGENLQSGENLQSGEN) are compositionally biased toward polar residues. Residues 1162–1172 (NNILYPYNNNG) show a composition bias toward low complexity. The HTH OST-type domain occupies 1277-1354 (TLEEVLEIIS…LHRTHIQHKK (78 aa)). Disordered regions lie at residues 1457–1499 (DIKQ…NNIS), 1958–1999 (AKNS…YYML), 2063–2099 (KRKNNNIHNYNDNNNDNNNDNNNDNNNDNNNDNNNDK), and 2501–2537 (DENNILNNNNDNNNNNNDKSNLVLHNNNDKSNHFLHN). 2 stretches are compositionally biased toward low complexity: residues 1469–1499 (NNINSNNSNNSNSNSNSNNNNNNNYNSNNIS) and 1962–1975 (NQENINQNEINYNN). A compositionally biased stretch (acidic residues) spans 1976 to 1994 (NDDDDDNNNNNNDDDDDDN). Low complexity-rich tracts occupy residues 2068 to 2095 (NIHNYNDNNNDNNNDNNNDNNNDNNNDN) and 2501 to 2526 (DENNILNNNNDNNNNNNDKSNLVLHN).

The sequence is that of Protein PFF0380w from Plasmodium falciparum (isolate 3D7).